The sequence spans 378 residues: Acetylornithine deacetylase (378 aa).

His-76 contributes to the Zn(2+) binding site. Asp-78 is an active-site residue. A Zn(2+)-binding site is contributed by Asp-108. Glu-140 is an active-site residue. Zn(2+) contacts are provided by Glu-141, Glu-165, and His-351.

It belongs to the peptidase M20A family. ArgE subfamily. In terms of assembly, homodimer. Requires Zn(2+) as cofactor. The cofactor is Co(2+). Glutathione serves as cofactor.

It localises to the cytoplasm. It catalyses the reaction N(2)-acetyl-L-ornithine + H2O = L-ornithine + acetate. It participates in amino-acid biosynthesis; L-arginine biosynthesis; L-ornithine from N(2)-acetyl-L-ornithine (linear): step 1/1. Catalyzes the hydrolysis of the amide bond of N(2)-acetylated L-amino acids. Cleaves the acetyl group from N-acetyl-L-ornithine to form L-ornithine, an intermediate in L-arginine biosynthesis pathway, and a branchpoint in the synthesis of polyamines. The polypeptide is Acetylornithine deacetylase (Aliivibrio fischeri (strain ATCC 700601 / ES114) (Vibrio fischeri)).